The primary structure comprises 678 residues: RAS guanyl-releasing protein 4 (678 aa).

Composition is skewed to basic residues over residues 1-10 (MNRKDIKRKS) and 20-32 (GHGR…RHKT). Disordered stretches follow at residues 1–33 (MNRK…HKTC) and 165–185 (GDAS…MSSP). The N-terminal Ras-GEF domain occupies 49-175 (GVLSESSCSV…DASNLLSPGG (127 aa)). The region spanning 201–432 (ETEELAQHLT…YELSYAREPR (232 aa)) is the Ras-GEF domain. Positions 466 to 501 (HVEQLVESVFKNYDPEGHGSISLEDFEKLSANFPFA) constitute an EF-hand domain. The Phorbol-ester/DAG-type zinc-finger motif lies at 540 to 595 (LHAFQEVTFRKPTFCHSCNGFVSTGPLWGVTKRGYRCQDCGLCCHRHCRDQVRVEC). 2 disordered regions span residues 598–620 (RPET…LPPT) and 651–678 (SSHS…KSSV). Pro residues predominate over residues 605 to 619 (PGPPGAPGPATPLPP).

It belongs to the RASGRP family. In terms of tissue distribution, expressed by mast cells and their progenitors (at protein level).

The protein resides in the cytoplasm. It localises to the cell membrane. Its function is as follows. Functions as a cation- and diacylglycerol (DAG)-regulated nucleotide exchange factor activating Ras through the exchange of bound GDP for GTP. In neutrophils, participates in a phospholipase C-activating N-formyl peptide-activated GPCR (G protein-coupled receptor) signaling pathway by promoting Ras-mediated activation of PIK3CG/PI3Kgamma to promote neutrophil functional responses. In CD117(+) dendritic cells and mast cells, participates in an lipopolysaccharide (LPS)-activated signaling pathway that stimulates the production of interferon-gamma and other pro-inflammatory cytokines by natural killer (NK) cells. May function in mast cell differentiation. Does not appear to be required for the development of B-cells, DC-cells, T-cells, or NK-cells. The polypeptide is RAS guanyl-releasing protein 4 (Rasgrp4) (Rattus norvegicus (Rat)).